The primary structure comprises 86 residues: Muscarinic toxin 7 (86 aa).

The N-terminal stretch at 1 to 21 (MKTLLLTLVVVTIVCLDLGYT) is a signal peptide. Finger loop stretches follow at residues 23–37 (TCVK…TSED), 44–63 (LCFK…TRGC), and 66–78 (TCPK…VINC). 4 cysteine pairs are disulfide-bonded: Cys24–Cys45, Cys38–Cys63, Cys67–Cys78, and Cys79–Cys84.

It belongs to the three-finger toxin family. Short-chain subfamily. Aminergic toxin sub-subfamily. In terms of tissue distribution, expressed by the venom gland.

The protein resides in the secreted. Binds specifically and irreversibly to an allosteric site of the muscarinic acetylcholine M1 receptor (CHRM1) at subnanomolar concentrations and shows a very slow dissociation rate. It also inhibits agonist-mediated guanosine 5'-O-(3'-thiotriphosphate) (GTP-g-S) binding and downstream signaling, and decreases the dissociation rate of orthosteric antagonists (N-methylscopolamine (NMS) or pirenzepine). Is a potent negative allosteric modulator (NAM) for CHRM1 activation and a positive allosteric modulator (PAM) for antagonist binding. This Dendroaspis angusticeps (Eastern green mamba) protein is Muscarinic toxin 7.